A 183-amino-acid polypeptide reads, in one-letter code: MHSISIVGRRYALALMEVAVDQNIVGQVMADFELIEQTMVEAKQLRLAIQSPLIQAYKKAALLKEVFGGKVSQQVATFLFLLASKNRAEYLPEVIQEYRALLDEQNGVISVDIKTAVDLDDKQTKQLKDKLEAYTSKKVRVHLATDKQLIGGLTIQIGDTVLDGSIRHQLAMLKNNLAAGALN.

It belongs to the ATPase delta chain family. In terms of assembly, F-type ATPases have 2 components, F(1) - the catalytic core - and F(0) - the membrane proton channel. F(1) has five subunits: alpha(3), beta(3), gamma(1), delta(1), epsilon(1). F(0) has three main subunits: a(1), b(2) and c(10-14). The alpha and beta chains form an alternating ring which encloses part of the gamma chain. F(1) is attached to F(0) by a central stalk formed by the gamma and epsilon chains, while a peripheral stalk is formed by the delta and b chains.

It localises to the cell inner membrane. F(1)F(0) ATP synthase produces ATP from ADP in the presence of a proton or sodium gradient. F-type ATPases consist of two structural domains, F(1) containing the extramembraneous catalytic core and F(0) containing the membrane proton channel, linked together by a central stalk and a peripheral stalk. During catalysis, ATP synthesis in the catalytic domain of F(1) is coupled via a rotary mechanism of the central stalk subunits to proton translocation. Functionally, this protein is part of the stalk that links CF(0) to CF(1). It either transmits conformational changes from CF(0) to CF(1) or is implicated in proton conduction. This is ATP synthase subunit delta from Chloroherpeton thalassium (strain ATCC 35110 / GB-78).